We begin with the raw amino-acid sequence, 207 residues long: MQIKSAEFIKSAAKPVGYPPGDLPEVAFAGRSNVGKSSLINVLVNRRGLVRTSSTPGRTQLLNFFEVNQHFMLVDLPGFGFAKVPVSVKKAWGRMTRTYLEERTNLKAVVLLFDIRREPRDEELQLLDWLEELNIPTIPVITKVDKVTKNRRRAQIRPILEATGLPQEAFSFFSALTREGREDILQRLDVALSDVEDEFGIDVPESE.

The 173-residue stretch at 22–194 (DLPEVAFAGR…LQRLDVALSD (173 aa)) folds into the EngB-type G domain. GTP-binding positions include 30–37 (GRSNVGKS), 57–61 (GRTQL), 75–78 (DLPG), 142–145 (TKVD), and 173–175 (FSA). Residues Ser37 and Thr59 each coordinate Mg(2+).

It belongs to the TRAFAC class TrmE-Era-EngA-EngB-Septin-like GTPase superfamily. EngB GTPase family. Mg(2+) is required as a cofactor.

Functionally, necessary for normal cell division and for the maintenance of normal septation. The protein is Probable GTP-binding protein EngB of Syntrophotalea carbinolica (strain DSM 2380 / NBRC 103641 / GraBd1) (Pelobacter carbinolicus).